A 37-amino-acid polypeptide reads, in one-letter code: Cytochrome b6-f complex subunit 5 (37 aa).

Residues Leu5–Ala25 traverse the membrane as a helical segment.

Belongs to the PetG family. In terms of assembly, the 4 large subunits of the cytochrome b6-f complex are cytochrome b6, subunit IV (17 kDa polypeptide, PetD), cytochrome f and the Rieske protein, while the 4 small subunits are PetG, PetL, PetM and PetN. The complex functions as a dimer.

The protein resides in the cellular thylakoid membrane. In terms of biological role, component of the cytochrome b6-f complex, which mediates electron transfer between photosystem II (PSII) and photosystem I (PSI), cyclic electron flow around PSI, and state transitions. PetG is required for either the stability or assembly of the cytochrome b6-f complex. This Thermosynechococcus vestitus (strain NIES-2133 / IAM M-273 / BP-1) protein is Cytochrome b6-f complex subunit 5.